A 383-amino-acid polypeptide reads, in one-letter code: Probable 2-succinylbenzoate--CoA ligase (383 aa).

It belongs to the ATP-dependent AMP-binding enzyme family. MenE subfamily.

It catalyses the reaction 2-succinylbenzoate + ATP + CoA = 2-succinylbenzoyl-CoA + AMP + diphosphate. Its pathway is quinol/quinone metabolism; 1,4-dihydroxy-2-naphthoate biosynthesis; 1,4-dihydroxy-2-naphthoate from chorismate: step 5/7. It functions in the pathway quinol/quinone metabolism; menaquinone biosynthesis. In terms of biological role, converts 2-succinylbenzoate (OSB) to 2-succinylbenzoyl-CoA (OSB-CoA). May be involved in the biosynthesis of menaquinone. The polypeptide is Probable 2-succinylbenzoate--CoA ligase (menE) (Mycobacterium tuberculosis (strain CDC 1551 / Oshkosh)).